The primary structure comprises 221 residues: Ras-related protein Rab-27A (221 aa).

Ser-2 carries the post-translational modification N-acetylserine. Ser-2 is subject to Phosphoserine. 16-24 (GDSGVGKTS) serves as a coordination point for GTP. The Effector region signature appears at 38–46 (FITTVGIDF). Residues 74–78 (DTAGQ), 133–136 (NKSD), and 163–165 (SAA) contribute to the GTP site. A disulfide bridge links Cys-123 with Cys-188. Residues Cys-219 and Cys-221 are each lipidated (S-geranylgeranyl cysteine). Cysteine methyl ester is present on Cys-221.

This sequence belongs to the small GTPase superfamily. Rab family. In terms of assembly, binds SYTL1, SLAC2B, MYRIP, SYTL3, SYTL4 and SYTL5. Interacts with RPH3A and RPH3A. Binds MLPH and SYTL2. Interacts with UNC13D. Does not interact with the BLOC-3 complex (heterodimer of HPS1 and HPS4). Interacts (GDP-bound form preferentially) with DENND10. High levels in eye, intestine, lung, pancreas and spleen, and low or absent in brain, liver, heart, kidney, and skeletal muscle.

The protein resides in the membrane. The protein localises to the melanosome. It localises to the late endosome. Its subcellular location is the lysosome. It catalyses the reaction GTP + H2O = GDP + phosphate + H(+). Regulated by guanine nucleotide exchange factors (GEFs) which promote the exchange of bound GDP for free GTP, GTPase activating proteins (GAPs) which increase the GTP hydrolysis activity, and GDP dissociation inhibitors which inhibit the dissociation of the nucleotide from the GTPase. Activated by GEFs such as DENND10. Its function is as follows. Small GTPase which cycles between active GTP-bound and inactive GDP-bound states. In its active state, binds to a variety of effector proteins to regulate homeostasis of late endocytic pathway, including endosomal positioning, maturation and secretion. Plays a role in cytotoxic granule exocytosis in lymphocytes. Required for both granule maturation and granule docking and priming at the immunologic synapse. This is Ras-related protein Rab-27A (Rab27a) from Rattus norvegicus (Rat).